The chain runs to 273 residues: S-adenosylmethionine decarboxylase proenzyme (273 aa).

Ser-118 serves as the catalytic Schiff-base intermediate with substrate; via pyruvic acid. Ser-118 carries the pyruvic acid (Ser); by autocatalysis modification. The active-site Proton acceptor; for processing activity is the His-123. Cys-146 (proton donor; for catalytic activity) is an active-site residue.

It belongs to the prokaryotic AdoMetDC family. Type 2 subfamily. Heterooctamer of four alpha and four beta chains arranged as a tetramer of alpha/beta heterodimers. Pyruvate is required as a cofactor. Is synthesized initially as an inactive proenzyme. Formation of the active enzyme involves a self-maturation process in which the active site pyruvoyl group is generated from an internal serine residue via an autocatalytic post-translational modification. Two non-identical subunits are generated from the proenzyme in this reaction, and the pyruvate is formed at the N-terminus of the alpha chain, which is derived from the carboxyl end of the proenzyme. The post-translation cleavage follows an unusual pathway, termed non-hydrolytic serinolysis, in which the side chain hydroxyl group of the serine supplies its oxygen atom to form the C-terminus of the beta chain, while the remainder of the serine residue undergoes an oxidative deamination to produce ammonia and the pyruvoyl group blocking the N-terminus of the alpha chain.

The enzyme catalyses S-adenosyl-L-methionine + H(+) = S-adenosyl 3-(methylsulfanyl)propylamine + CO2. The protein operates within amine and polyamine biosynthesis; S-adenosylmethioninamine biosynthesis; S-adenosylmethioninamine from S-adenosyl-L-methionine: step 1/1. Catalyzes the decarboxylation of S-adenosylmethionine to S-adenosylmethioninamine (dcAdoMet), the propylamine donor required for the synthesis of the polyamines spermine and spermidine from the diamine putrescine. This is S-adenosylmethionine decarboxylase proenzyme from Alkalilimnicola ehrlichii (strain ATCC BAA-1101 / DSM 17681 / MLHE-1).